The sequence spans 372 residues: Glutamate 5-kinase (372 aa).

Lys-14 contacts ATP. Residues Ser-54, Asp-141, and Asn-153 each coordinate substrate. An ATP-binding site is contributed by 173–174 (TD). One can recognise a PUA domain in the interval 280–358 (RGTLTLDEGA…DEIEKLLGYV (79 aa)).

Belongs to the glutamate 5-kinase family.

It is found in the cytoplasm. The enzyme catalyses L-glutamate + ATP = L-glutamyl 5-phosphate + ADP. It participates in amino-acid biosynthesis; L-proline biosynthesis; L-glutamate 5-semialdehyde from L-glutamate: step 1/2. Its function is as follows. Catalyzes the transfer of a phosphate group to glutamate to form L-glutamate 5-phosphate. This chain is Glutamate 5-kinase, found in Stutzerimonas stutzeri (strain A1501) (Pseudomonas stutzeri).